The sequence spans 219 residues: tRNA (guanine-N(7)-)-methyltransferase (219 aa).

S-adenosyl-L-methionine contacts are provided by glutamate 46, glutamate 71, asparagine 100, and aspartate 122. Aspartate 122 is an active-site residue. Substrate contacts are provided by residues lysine 126, aspartate 158, and 199-202 (TEYE).

Belongs to the class I-like SAM-binding methyltransferase superfamily. TrmB family.

The enzyme catalyses guanosine(46) in tRNA + S-adenosyl-L-methionine = N(7)-methylguanosine(46) in tRNA + S-adenosyl-L-homocysteine. The protein operates within tRNA modification; N(7)-methylguanine-tRNA biosynthesis. Its function is as follows. Catalyzes the formation of N(7)-methylguanine at position 46 (m7G46) in tRNA. This is tRNA (guanine-N(7)-)-methyltransferase from Leuconostoc citreum (strain KM20).